A 777-amino-acid polypeptide reads, in one-letter code: Spastin (777 aa).

Composition is skewed to low complexity over residues 1–24, 51–76, and 85–94; these read MVRT…KSNN, HAHS…SSSP, and DDLTPTGSSP. The interval 1 to 103 is disordered; sequence MVRTKSSSSS…PRSCNGRGHS (103 aa). Residues 1 to 116 are Cytoplasmic-facing; it reads MVRTKSSSSS…KQNLYVVSFP (116 aa). Residues 1 to 215 form a required for localization to punctate cytoplasmic foci region; that stretch reads MVRTKSSSSS…RALQPLEMAT (215 aa). Residues 117-137 constitute an intramembrane region (helical); that stretch reads IIFLFNVLRSLIYQLFCIFRY. The Cytoplasmic segment spans residues 138–777; the sequence is LYGASTKVLY…WSQDYGDITI (640 aa). The sufficient for interaction with microtubules and microtubule severing stretch occupies residues 213–777; that stretch reads MATNRPGGGY…WSQDYGDITI (565 aa). Positions 238–313 constitute an MIT domain; that stretch reads HRRAFEYISK…SMARDRLHFL (76 aa). The segment at 327–474 is disordered; sequence LKEKQPAPKQ…SSGSGASTPM (148 aa). Polar residues-rich tracts occupy residues 372–389, 406–425, and 444–460; these read QNGT…TATG, PVTN…TTVG, and QFSS…RTPI. Residues 461–471 are compositionally biased toward low complexity; it reads NNNASSGSGAS. The tract at residues 462–474 is required for interaction with microtubules; it reads NNASSGSGASTPM. Position 542–549 (542–549) interacts with ATP; it reads GPPGNGKT.

This sequence belongs to the AAA ATPase family. Spastin subfamily. In terms of assembly, homohexamer. The homohexamer is stabilized by ATP-binding. The homohexamer may adopt a ring conformation through which microtubules pass prior to being severed. Interacts with microtubules. Interacts with atl; may be involved in microtubule dynamics.

The protein localises to the membrane. It is found in the cytoplasm. The protein resides in the cytoskeleton. It localises to the microtubule organizing center. Its subcellular location is the centrosome. The protein localises to the chromosome. It is found in the lipid droplet. It catalyses the reaction n ATP + n H2O + a microtubule = n ADP + n phosphate + (n+1) alpha/beta tubulin heterodimers.. Its function is as follows. ATP-dependent microtubule severing protein. Stimulates microtubule minus-end depolymerization and poleward microtubule flux in the mitotic spindle. Regulates microtubule stability in the neuromuscular junction synapse. Involved in lipid metabolism by regulating the size and distribution of lipid droplets. Involved in axon regeneration by regulating microtubule severing. In Drosophila willistoni (Fruit fly), this protein is Spastin.